We begin with the raw amino-acid sequence, 449 residues long: Polyadenylation factor subunit 2 (449 aa).

7 WD repeats span residues 77-116 (KVKHVIPAITWTPEGRRLVVATYSGEFSLWNGSSFNFESI), 119-158 (AHDSAVTVMQYSHAGDWLISGDADGTIKIWQPNFNMVKVL), 161-200 (AHTECMRDISFSYSDQKFVTCSDDNVLKIWNFSNGQQERV), 203-242 (GHHWDVKSCDWHPKMGLIVSGSKDNLIKLWDPRTGRNVST), 245-285 (GLKH…RELQ), 288-328 (RDDM…SNST), and 337-376 (AHEKSVTSLAYSPVGHILASAAKDRTIRFWARSRPVDPNA). Residues 411–432 (LPPANETNLGTPQPSILGSESI) form a disordered region. Positions 415–432 (NETNLGTPQPSILGSESI) are enriched in polar residues.

The protein resides in the nucleus. Its function is as follows. Required for 3'-end cleavage and polyadenylation of pre-mRNAs. Also involved in chromosome segregation where it has a role in chromosome attachment to the mitotic spindle. This Eremothecium gossypii (strain ATCC 10895 / CBS 109.51 / FGSC 9923 / NRRL Y-1056) (Yeast) protein is Polyadenylation factor subunit 2 (PSF2).